A 973-amino-acid polypeptide reads, in one-letter code: Valine--tRNA ligase (973 aa).

Positions 57 to 67 (PNVTGSLHMGH) match the 'HIGH' region motif. A 'KMSKS' region motif is present at residues 569–573 (KMSKS). Position 572 (lysine 572) interacts with ATP. A coiled-coil region spans residues 901–970 (MAGLIDKEAE…AKILEQKIQI (70 aa)).

The protein belongs to the class-I aminoacyl-tRNA synthetase family. ValS type 1 subfamily. In terms of assembly, monomer.

The protein resides in the cytoplasm. The enzyme catalyses tRNA(Val) + L-valine + ATP = L-valyl-tRNA(Val) + AMP + diphosphate. Its function is as follows. Catalyzes the attachment of valine to tRNA(Val). As ValRS can inadvertently accommodate and process structurally similar amino acids such as threonine, to avoid such errors, it has a 'posttransfer' editing activity that hydrolyzes mischarged Thr-tRNA(Val) in a tRNA-dependent manner. This chain is Valine--tRNA ligase, found in Colwellia psychrerythraea (strain 34H / ATCC BAA-681) (Vibrio psychroerythus).